Consider the following 802-residue polypeptide: Lon protease (802 aa).

In terms of domain architecture, Lon N-terminal spans 21–215 (LPLLPVRDII…KIIQILNAEI (195 aa)). Residue 367–374 (GPPGVGKT) coordinates ATP. One can recognise a Lon proteolytic domain in the interval 603-784 (ENDVGVATGL…DEVISLTIER (182 aa)). Residues Ser690 and Lys733 contribute to the active site.

Belongs to the peptidase S16 family. As to quaternary structure, homohexamer. Organized in a ring with a central cavity.

Its subcellular location is the cytoplasm. It catalyses the reaction Hydrolysis of proteins in presence of ATP.. ATP-dependent serine protease that mediates the selective degradation of mutant and abnormal proteins as well as certain short-lived regulatory proteins. Required for cellular homeostasis and for survival from DNA damage and developmental changes induced by stress. Degrades polypeptides processively to yield small peptide fragments that are 5 to 10 amino acids long. Binds to DNA in a double-stranded, site-specific manner. This Endomicrobium trichonymphae protein is Lon protease.